Here is a 213-residue protein sequence, read N- to C-terminus: NADH-quinone oxidoreductase subunit I (213 aa).

4Fe-4S ferredoxin-type domains lie at 74–103 (RFIESENERCIGCGLCEKICISNCIRMETS) and 113–142 (GNYSINLGRCIYCGFCAEVCPELAIVHGTE). [4Fe-4S] cluster contacts are provided by C83, C86, C89, C93, C122, C125, C128, and C132.

Belongs to the complex I 23 kDa subunit family. As to quaternary structure, NDH-1 is composed of 14 different subunits. Subunits NuoA, H, J, K, L, M, N constitute the membrane sector of the complex. The cofactor is [4Fe-4S] cluster.

It localises to the cell inner membrane. The catalysed reaction is a quinone + NADH + 5 H(+)(in) = a quinol + NAD(+) + 4 H(+)(out). In terms of biological role, NDH-1 shuttles electrons from NADH, via FMN and iron-sulfur (Fe-S) centers, to quinones in the respiratory chain. The immediate electron acceptor for the enzyme in this species is believed to be ubiquinone. Couples the redox reaction to proton translocation (for every two electrons transferred, four hydrogen ions are translocated across the cytoplasmic membrane), and thus conserves the redox energy in a proton gradient. This Campylobacter jejuni subsp. jejuni serotype O:6 (strain 81116 / NCTC 11828) protein is NADH-quinone oxidoreductase subunit I.